Reading from the N-terminus, the 449-residue chain is Capsid protein (449 aa).

The DNA-binding stretch occupies residues 1–43; sequence MERRARRPRGRFYAFRRGRWNHLKRLRRRYKFRHRRRQRYRRR. The tract at residues 6–47 is nuclear localization signals; the sequence is RRPRGRFYAFRRGRWNHLKRLRRRYKFRHRRRQRYRRRAFRK.

Belongs to the gyrovirus capsid protein family. Homomultimer (Potential). Interacts with Rep; this interaction relocates Rep into the nucleus.

It localises to the host nucleus. Its subcellular location is the virion. Functionally, self-assembles to form the virion icosahedral capsid with a T=1 symmetry. This very small capsid (25 nm in diameter) allows the virus to be very stable in the environment and resistant to some disinfectants, including detergents. Essential for the initial attachment to host receptors. After attachment, the virus is endocytosed and traffics to the nucleus. The capsid protein binds and transports the viral genome and Rep across the nuclear envelope. The sequence is that of Capsid protein (VP1) from Chicken anemia virus (isolate Japan 82-2) (CAV).